The sequence spans 204 residues: Pyridoxamine 5'-phosphate oxidase YLR456W homolog (204 aa).

Residues 65 to 66 (FT) and Asn-127 contribute to the FMN site.

The protein belongs to the pyridoxamine 5'-phosphate oxidase family. The cofactor is FMN.

The protein localises to the cytoplasm. It is found in the nucleus. This Saccharomyces cerevisiae (strain ATCC 204508 / S288c) (Baker's yeast) protein is Pyridoxamine 5'-phosphate oxidase YLR456W homolog.